The chain runs to 161 residues: Lipid droplet assembly factor 1 (161 aa).

Residues 1–43 (MAKEEPQSISRDLQELQKKLSLLIDSFQNNSKVVAFMKSPVGQ) lie on the Cytoplasmic side of the membrane. Residues 44-61 (YLDSHPFLAFTLLVFIVM) form a helical membrane-spanning segment. Residues 62-67 (SAVPVG) lie on the Lumenal side of the membrane. Residues 68–87 (FFLLIVVLTTLAALLGVIIL) traverse the membrane as a helical segment. At 88–93 (EGLVIS) the chain is on the cytoplasmic side. The helical transmembrane segment at 94–110 (VGGFSLLCILCGLGFVS) threads the bilayer. At 111–116 (LAMSGM) the chain is on the lumenal side. Residues 117 to 133 (MIASYVVVSSLISCWFS) form a helical membrane-spanning segment. At 134–161 (PRPLTQQNTSCDFLPAMKSAEFEGLYQE) the chain is on the cytoplasmic side.

It belongs to the LDAF1 family. As to quaternary structure, interacts with isoform 1 and isoform 3 of BSCL2/seipin to form an oligomeric complex. Expressed at high levels in the heart and skeletal muscle. Expressed at low levels in kidney, small intestine, lung and liver.

Its subcellular location is the endoplasmic reticulum membrane. The protein resides in the lipid droplet. Plays an important role in the formation of lipid droplets (LD) which are storage organelles at the center of lipid and energy homeostasis. In association with BSCL2/seipin, defines the sites of LD formation in the endoplasmic reticulum. The chain is Lipid droplet assembly factor 1 from Homo sapiens (Human).